The following is a 237-amino-acid chain: Ribosomal RNA small subunit methyltransferase G (237 aa).

S-adenosyl-L-methionine is bound by residues Gly-78, Phe-83, 129–130 (AE), and Arg-148. The segment at 218 to 237 (KKETPNKYPRKAGMPNKRPL) is disordered.

The protein belongs to the methyltransferase superfamily. RNA methyltransferase RsmG family.

It localises to the cytoplasm. Its function is as follows. Specifically methylates the N7 position of a guanine in 16S rRNA. The sequence is that of Ribosomal RNA small subunit methyltransferase G from Streptococcus sanguinis (strain SK36).